The following is a 225-amino-acid chain: Orotate phosphoribosyltransferase (225 aa).

Lysine 32 is a 5-phospho-alpha-D-ribose 1-diphosphate binding site. 40-41 (FF) is a binding site for orotate. Residues 78–79 (YK), arginine 104, lysine 105, lysine 108, histidine 110, and 129–137 (DDVISAGTS) each bind 5-phospho-alpha-D-ribose 1-diphosphate. Orotate contacts are provided by serine 133 and arginine 161.

It belongs to the purine/pyrimidine phosphoribosyltransferase family. PyrE subfamily. As to quaternary structure, homodimer. It depends on Mg(2+) as a cofactor.

It catalyses the reaction orotidine 5'-phosphate + diphosphate = orotate + 5-phospho-alpha-D-ribose 1-diphosphate. It participates in pyrimidine metabolism; UMP biosynthesis via de novo pathway; UMP from orotate: step 1/2. In terms of biological role, catalyzes the transfer of a ribosyl phosphate group from 5-phosphoribose 1-diphosphate to orotate, leading to the formation of orotidine monophosphate (OMP). This Cupriavidus metallidurans (strain ATCC 43123 / DSM 2839 / NBRC 102507 / CH34) (Ralstonia metallidurans) protein is Orotate phosphoribosyltransferase.